We begin with the raw amino-acid sequence, 551 residues long: uncharacterized protein (551 aa).

Disordered regions lie at residues 66-111 (GNNK…STNL), 130-165 (PEAT…EKSN), 180-229 (AFNP…LSNL), and 277-303 (AFTS…VPLS). S74 is modified (phosphoserine). Polar residues-rich tracts occupy residues 92 to 111 (GFSN…STNL) and 143 to 156 (VVNT…GTQE). Residues 182–193 (NPSSVLPSNSSS) are compositionally biased toward low complexity. Positions 204–226 (KETYQPNTFRRSPLKNDTGSVEL) are enriched in polar residues. Residues 290 to 299 (TRPSSTRFPS) show a composition bias toward low complexity.

This is an uncharacterized protein from Schizosaccharomyces pombe (strain 972 / ATCC 24843) (Fission yeast).